We begin with the raw amino-acid sequence, 504 residues long: Maturase K (504 aa).

It belongs to the intron maturase 2 family. MatK subfamily.

It is found in the plastid. It localises to the chloroplast. In terms of biological role, usually encoded in the trnK tRNA gene intron. Probably assists in splicing its own and other chloroplast group II introns. The sequence is that of Maturase K from Draba nemorosa (Woodland whitlowgrass).